The primary structure comprises 92 residues: Small ribosomal subunit protein uS19 (92 aa).

The protein belongs to the universal ribosomal protein uS19 family.

Protein S19 forms a complex with S13 that binds strongly to the 16S ribosomal RNA. The protein is Small ribosomal subunit protein uS19 of Methylobacterium nodulans (strain LMG 21967 / CNCM I-2342 / ORS 2060).